Here is an 865-residue protein sequence, read N- to C-terminus: FO synthase (865 aa).

A disordered region spans residues 1 to 21 (MIEGVTELATPNVPPAPPSPS). Radical SAM core domains are found at residues 76 to 320 (ITYS…LGPD) and 544 to 785 (VTYV…DNIQ). Residues 77–409 (TYSRNVFIPL…PRIGAHVAAL (333 aa)) form a cofG-like region. Residues Cys-90, Cys-94, Cys-97, Cys-558, Cys-562, and Cys-565 each coordinate [4Fe-4S] cluster. The tract at residues 521–854 (DGAELDAVAA…RERTTVYGRV (334 aa)) is cofH-like.

The protein in the N-terminal section; belongs to the radical SAM superfamily. CofG family. It in the C-terminal section; belongs to the radical SAM superfamily. CofH family. It depends on [4Fe-4S] cluster as a cofactor.

The enzyme catalyses 5-amino-6-(D-ribitylamino)uracil + L-tyrosine + S-adenosyl-L-methionine = 5-amino-5-(4-hydroxybenzyl)-6-(D-ribitylimino)-5,6-dihydrouracil + 2-iminoacetate + 5'-deoxyadenosine + L-methionine + H(+). The catalysed reaction is 5-amino-5-(4-hydroxybenzyl)-6-(D-ribitylimino)-5,6-dihydrouracil + S-adenosyl-L-methionine = 7,8-didemethyl-8-hydroxy-5-deazariboflavin + 5'-deoxyadenosine + L-methionine + NH4(+) + H(+). It functions in the pathway cofactor biosynthesis; coenzyme F0 biosynthesis. In terms of biological role, catalyzes the radical-mediated synthesis of 7,8-didemethyl-8-hydroxy-5-deazariboflavin (FO) from 5-amino-6-(D-ribitylamino)uracil and L-tyrosine. The protein is FO synthase (fbiC) of Nocardia farcinica (strain IFM 10152).